The sequence spans 62 residues: UPF0291 protein CLM_2971 (62 aa).

It belongs to the UPF0291 family.

It localises to the cytoplasm. The chain is UPF0291 protein CLM_2971 from Clostridium botulinum (strain Kyoto / Type A2).